Consider the following 644-residue polypeptide: MFQDNPLLAQLKQQLHSQTPRAEGVVKATEKGFGFLEVDAQKSYFIPPPQMKKVMHGDRIVAVIHTEKERESAEPEELIEPFLTRFVGKVQGKNDRLSIVPDHPLLKDAIPCRAARGVQHEFKEGDWAVAEMRRHPLKGDRSFYADLTQYITFADDHFVPWWVTLARHNLEKEAPNGVATEMLDEGLERQDLTALNFVTIDSASTEDMDDALYAEELADGRLQLTVAIADPTAWIAEGSKLDNTAKIRAFTNYLPGFNIPMLPRELSDDLCSLRANEVRPALACRMIIAADGTIDDDIAFFAATIESKAKLAYDNVSDWLENNGTWQPENEDIAQQIRLLHRICLSRSEWRHHHALVFKDRPDYRFVLGEKGEVLDIVAEPRRIANRIVEESMIAANLCAARVLRDKLGFGIYNVHTGFDPANADALAALLKTHGLHVDAEEVLTLEGFCKLRRELDAQPSGFLDSRIRRFQSFAEISTEPGPHFGLGLEAYATWTSPIRKYGDMINHRLLKAVIKGEAIARPQEDITQQMAERRRLNRMAERDVGDWLYARFLNDKAGTNTRFAAEIIDVSRGGMRVRLVDNGAIAFIPAPFLHAVRDELVCSQENGTVQIKGETVYKVTDVIDVTIAEVRMETRSIIARPAA.

Residues 189–516 (RQDLTALNFV…NHRLLKAVIK (328 aa)) enclose the RNB domain. Residues 561–643 (NTRFAAEIID…ETRSIIARPA (83 aa)) enclose the S1 motif domain.

It belongs to the RNR ribonuclease family. RNase II subfamily.

It localises to the cytoplasm. The catalysed reaction is Exonucleolytic cleavage in the 3'- to 5'-direction to yield nucleoside 5'-phosphates.. Its function is as follows. Involved in mRNA degradation. Hydrolyzes single-stranded polyribonucleotides processively in the 3' to 5' direction. This is Exoribonuclease 2 from Salmonella newport (strain SL254).